The following is a 771-amino-acid chain: Nitrogen regulation protein NtrY (771 aa).

The next 4 helical transmembrane spans lie at 22-46 (FGLFAPAVVLLALISALATFLILMG), 56-76 (VVISVLLVNAAAVLILSAMVG), 99-122 (IVGLFAVVSVVPAILVAVVASLTL), and 295-319 (VAFALMYAVITLIVLLSAVWLGLNF). The region spanning 321 to 374 (KWLVAPIRRLMSAADHVAEGNLDVRVPIYRAEGDLASLAETFNKMTHELRSQRE) is the HAMP domain. The PAS domain maps to 386-458 (RRRFTEAVLS…HARQRSVQGN (73 aa)). The Histidine kinase domain maps to 511-728 (RIAHEIKNPL…WIRLTLKAEG (218 aa)). H514 bears the Phosphohistidine; by autocatalysis mark. Positions 727 to 771 (EGPKAEPTDASTKATGAATPAAPAASAMARDAAADSAARGKNERT) are disordered. Positions 740–763 (ATGAATPAAPAASAMARDAAADSA) are enriched in low complexity.

The protein localises to the cell membrane. The catalysed reaction is ATP + protein L-histidine = ADP + protein N-phospho-L-histidine.. Its function is as follows. Member of the two-component regulatory system NtrY/NtrX involved in nitrogen level control. Probably activates NtrX by phosphorylation. The sequence is that of Nitrogen regulation protein NtrY (ntrY) from Azorhizobium caulinodans (strain ATCC 43989 / DSM 5975 / JCM 20966 / LMG 6465 / NBRC 14845 / NCIMB 13405 / ORS 571).